A 422-amino-acid chain; its full sequence is CRISPR-associated endodeoxyribonuclease Cas12f1 (422 aa).

The interval 1 to 126 (MIKVYRYEIV…PSYKRDIPLD (126 aa)) is recognition domain (REC). The interval 127–211 (LIKENISVNR…YLNISYDFEP (85 aa)) is wedge domain (WED). Residues 212 to 220 (QTRVLDLNK) form a linker region. The ruvC-I stretch occupies residues 221–370 (IMGIDLGVAV…IKIDPQYTSQ (150 aa)). Active-site residues include aspartate 225 and glutamate 324. The target nucleic acid-binding (TNB) stretch occupies residues 371–399 (RCSECGNIDSGNRIGQAIFKCRACGYEAN). Zn(2+)-binding residues include cysteine 372, cysteine 375, cysteine 391, and cysteine 394. A ruvC-II region spans residues 400-420 (ADYNAARNIAIPNIDKIIAES). The active site involves aspartate 401.

The protein belongs to the CRISPR-associated endonuclease Cas12f family. An asymmetric homodimer. Guide RNA is probably required for dimerization. Mg(2+) serves as cofactor. Requires Zn(2+) as cofactor.

Its function is as follows. CRISPR (clustered regularly interspaced short palindromic repeat), is an adaptive immune system that provides protection against mobile genetic elements (viruses, transposable elements and conjugative plasmids). CRISPR clusters contain sequences complementary to antecedent mobile elements and target invading nucleic acids. CRISPR clusters are transcribed and processed into CRISPR RNA (crRNA), which requires a trans-encoded small RNA (tracrRNA), but not this protein. Recognizes a short motif in the CRISPR repeat sequences (the 5' PAM or protospacer adjacent motif, YTT in this organism) to help distinguish self versus nonself, as targets within the CRISPR locus do not have PAMs. Has dsDNA endonuclease activity upon expression in E.coli of this protein, a mini CRISPR array and the probable tracrRNA. Plasmid cleavage is centered around positions 19-24 base pairs 3' of PAM. The mini system protects E.coli against transformation by foreign plasmids. The sequence is that of CRISPR-associated endodeoxyribonuclease Cas12f1 from Sulfoacidibacillus thermotolerans (Acidibacillus sulfuroxidans).